Reading from the N-terminus, the 253-residue chain is Zinc finger protein JAGGED (253 aa).

The interval 1 to 46 is disordered; the sequence is MRHEENYLDLNNLPDDFSKDGNKQALEEGSSSGQRKKKGSKEGKDE. The span at 16 to 26 shows a compositional bias: basic and acidic residues; that stretch reads DFSKDGNKQAL. The segment at 51–73 adopts a C2H2-type zinc-finger fold; sequence YECRFCSLKFCKSQALGGHMNRH.

In terms of assembly, interacts with GATA18/HAN. Expressed in the emerging leaf, sepal, petal, stamen and carpel primordia. Not expressed in the apical shoot meristem (SAM).

It localises to the nucleus. Controls the morphogenesis of lateral organs. Functions in lateral organ shape and is sufficient to induce proliferation and growth of lateral organ tissue. Is necessary and sufficient for bract formation, but its expression is excluded from the cryptic bract, which could be a cause of bractless flowers in Arabidopsis. Participates with FIL and YAB3 in regulating valve margin development. Functions with JGL to define stamen and carpel shape. Functions with AS1 and AS2 in the sepal and petal primordia to repress boundary-specifying genes for normal development of the organs. The protein is Zinc finger protein JAGGED (JAG) of Arabidopsis thaliana (Mouse-ear cress).